We begin with the raw amino-acid sequence, 265 residues long: Expansin-like A2 (265 aa).

The signal sequence occupies residues 1-21 (MLQGFLFLLSVVLLFSSSAAA). Residues 42-148 (SGACAYGSMA…RRVPCDYGNK (107 aa)) form the Expansin-like EG45 domain. Asn-100 and Asn-103 each carry an N-linked (GlcNAc...) asparagine glycan. The Expansin-like CBD domain maps to 162 to 244 (NYLAIKLLYQ…NWEAGKSYDA (83 aa)).

It belongs to the expansin family. Expansin-like A subfamily.

The protein resides in the secreted. The sequence is that of Expansin-like A2 (EXLA2) from Arabidopsis thaliana (Mouse-ear cress).